We begin with the raw amino-acid sequence, 133 residues long: Ubiquitin-like FUBI-ribosomal protein eS30 fusion protein (133 aa).

The interval 84 to 110 (GKVRGQTPKVAKQEKKKKKTGRAKRRM) is disordered. Residues 97-110 (EKKKKKTGRAKRRM) show a composition bias toward basic residues. N6-succinyllysine is present on Lys125.

The protein in the N-terminal section; belongs to the ubiquitin family. This sequence in the C-terminal section; belongs to the eukaryotic ribosomal protein eS30 family. As to quaternary structure, component of the 40S subunit of the ribosome. In terms of processing, FUBI is cleaved from ribosomal protein S30 by the deubiquitinase USP36 before the assembly of ribosomal protein S30 into pre-40S ribosomal particles. FUBI removal from ribosomal protein S30 is a crucial event for the final maturation of pre-40S particles.

The protein resides in the nucleus. The protein localises to the cytoplasm. Functionally, may have pro-apoptotic activity. Component of the 40S subunit of the ribosome. Contributes to the assembly and function of 40S ribosomal subunits. The sequence is that of Ubiquitin-like FUBI-ribosomal protein eS30 fusion protein (Fau) from Mus musculus (Mouse).